We begin with the raw amino-acid sequence, 572 residues long: 2-isopropylmalate synthase (572 aa).

The 275-residue stretch at 31-305 (PIWMSTDLRD…DPGLDFSNIN (275 aa)) folds into the Pyruvate carboxyltransferase domain. Residues Asp-40, His-244, His-246, and Asn-280 each contribute to the Mg(2+) site. Positions 437–572 (NTAPIHYVGH…MNDAAESVGV (136 aa)) are regulatory domain.

This sequence belongs to the alpha-IPM synthase/homocitrate synthase family. LeuA type 2 subfamily. Homodimer. Mg(2+) is required as a cofactor.

It is found in the cytoplasm. The enzyme catalyses 3-methyl-2-oxobutanoate + acetyl-CoA + H2O = (2S)-2-isopropylmalate + CoA + H(+). The protein operates within amino-acid biosynthesis; L-leucine biosynthesis; L-leucine from 3-methyl-2-oxobutanoate: step 1/4. Functionally, catalyzes the condensation of the acetyl group of acetyl-CoA with 3-methyl-2-oxobutanoate (2-ketoisovalerate) to form 3-carboxy-3-hydroxy-4-methylpentanoate (2-isopropylmalate). The chain is 2-isopropylmalate synthase from Paraburkholderia phytofirmans (strain DSM 17436 / LMG 22146 / PsJN) (Burkholderia phytofirmans).